The chain runs to 213 residues: Proteasome subunit beta (213 aa).

Positions 1–11 are cleaved as a propeptide — removed in mature form; by autocatalysis; that stretch reads MSMIEEKIYKG. T12 (nucleophile) is an active-site residue.

It belongs to the peptidase T1B family. As to quaternary structure, the 20S proteasome core is composed of 14 alpha and 14 beta subunits that assemble into four stacked heptameric rings, resulting in a barrel-shaped structure. The two inner rings, each composed of seven catalytic beta subunits, are sandwiched by two outer rings, each composed of seven alpha subunits. The catalytic chamber with the active sites is on the inside of the barrel. Has probably a gated structure, the ends of the cylinder being occluded by the N-termini of the alpha-subunits. Is likely capped at one or both ends by the proteasome regulatory ATPase, PAN.

It is found in the cytoplasm. It catalyses the reaction Cleavage of peptide bonds with very broad specificity.. Its activity is regulated as follows. The formation of the proteasomal ATPase PAN-20S proteasome complex, via the docking of the C-termini of PAN into the intersubunit pockets in the alpha-rings, triggers opening of the gate for substrate entry. Interconversion between the open-gate and close-gate conformations leads to a dynamic regulation of the 20S proteasome proteolysis activity. Its function is as follows. Component of the proteasome core, a large protease complex with broad specificity involved in protein degradation. This chain is Proteasome subunit beta, found in Archaeoglobus fulgidus (strain ATCC 49558 / DSM 4304 / JCM 9628 / NBRC 100126 / VC-16).